The sequence spans 100 residues: Urease subunit gamma (100 aa).

The protein belongs to the urease gamma subunit family. As to quaternary structure, heterotrimer of UreA (gamma), UreB (beta) and UreC (alpha) subunits. Three heterotrimers associate to form the active enzyme.

The protein localises to the cytoplasm. It carries out the reaction urea + 2 H2O + H(+) = hydrogencarbonate + 2 NH4(+). Its pathway is nitrogen metabolism; urea degradation; CO(2) and NH(3) from urea (urease route): step 1/1. The chain is Urease subunit gamma from Teredinibacter turnerae (strain ATCC 39867 / T7901).